The primary structure comprises 348 residues: Inosamine-phosphate amidinotransferase 1 (348 aa).

Active-site residues include D179 and H227. C332 serves as the catalytic Amidino-cysteine intermediate.

Belongs to the amidinotransferase family. Homodimer.

The catalysed reaction is 1-amino-1-deoxy-scyllo-inositol 4-phosphate + L-arginine = 1-guanidino-1-deoxy-scyllo-inositol 4-phosphate + L-ornithine. Its pathway is antibiotic biosynthesis; streptomycin biosynthesis. Functionally, catalyzes two non-consecutive transamidination reactions. It converts scyllo-inosamine 4-phosphate into N-amidino-scyllo-inosamine 4-phosphate and N1-amidinostreptamine 6-phosphate into streptidine 6-phosphate. This Streptomyces glaucescens protein is Inosamine-phosphate amidinotransferase 1 (strB1).